Consider the following 231-residue polypeptide: Histidine biosynthesis bifunctional protein HisIE (231 aa).

A phosphoribosyl-AMP cyclohydrolase region spans residues 1–130; sequence MQDVFRQIDW…QKYPIGVYHI (130 aa). Positions 131–231 are phosphoribosyl-ATP pyrophosphohydrolase; it reads LDDLYHIIEQ…GIEEKASRKH (101 aa).

In the N-terminal section; belongs to the PRA-CH family. The protein in the C-terminal section; belongs to the PRA-PH family.

Its subcellular location is the cytoplasm. It carries out the reaction 1-(5-phospho-beta-D-ribosyl)-ATP + H2O = 1-(5-phospho-beta-D-ribosyl)-5'-AMP + diphosphate + H(+). It catalyses the reaction 1-(5-phospho-beta-D-ribosyl)-5'-AMP + H2O = 1-(5-phospho-beta-D-ribosyl)-5-[(5-phospho-beta-D-ribosylamino)methylideneamino]imidazole-4-carboxamide. It functions in the pathway amino-acid biosynthesis; L-histidine biosynthesis; L-histidine from 5-phospho-alpha-D-ribose 1-diphosphate: step 2/9. Its pathway is amino-acid biosynthesis; L-histidine biosynthesis; L-histidine from 5-phospho-alpha-D-ribose 1-diphosphate: step 3/9. In Helicobacter hepaticus (strain ATCC 51449 / 3B1), this protein is Histidine biosynthesis bifunctional protein HisIE.